We begin with the raw amino-acid sequence, 409 residues long: BRCA1-A complex subunit Abraxas 1 (409 aa).

Residues 7 to 160 (SAVLSGFVLG…HSLYKPQKGL (154 aa)) enclose the MPN domain. A Phosphoserine modification is found at S48. Residues 206–260 (DGSLKEVHKINEMYASLQEELKSICKKVEDSEQAVDKLVKDVNRLKREIEKRRGA) are a coiled coil. A compositionally biased stretch (basic and acidic residues) spans 362-372 (LLDTQDKRSKA). Positions 362 to 409 (LLDTQDKRSKADTGSSNQDKASKMSSPETDEEIEKMKGFGEYSRSPTF) are disordered. The span at 373–388 (DTGSSNQDKASKMSSP) shows a compositional bias: polar residues. S386 and S387 each carry phosphoserine. The residue at position 390 (T390) is a Phosphothreonine. A phosphoserine mark is found at S404 and S406. A pSXXF motif motif is present at residues 406–409 (SPTF).

The protein belongs to the FAM175 family. Abraxas subfamily. In terms of assembly, component of the ARISC complex, at least composed of UIMC1/RAP80, ABRAXAS1, BRCC3/BRCC36, BABAM2 and BABAM1/NBA1. Component of the BRCA1-A complex, at least composed of BRCA1, BARD1, UIMC1/RAP80, ABRAXAS1, BRCC3/BRCC36, BABAM2 and BABAM1/NBA1. In the complex, interacts directly with UIMC1/RAP80, BRCC3/BRCC36 and BABAM2. Interacts directly (when phosphorylated at Ser-406) with BRCA1. Homodimer. The homodimer interacts directly (when phosphorylated at Ser-404 and Ser-406) with two BRCA1 chains, giving rise to a heterotetramer. Binds polyubiquitin. Post-translationally, phosphorylation of Ser-406 of the pSXXF motif by ATM or ATR constitutes a specific recognition motif for the BRCT domain of BRCA1. Ionizing radiation promotes rapid phosphorylation at Ser-404 and Ser-406 by ATM; this promotes recruitment of BRCA1 to sites of DNA damage.

It is found in the nucleus. Functionally, involved in DNA damage response and double-strand break (DSB) repair. Component of the BRCA1-A complex, acting as a central scaffold protein that assembles the various components of the complex and mediates the recruitment of BRCA1. The BRCA1-A complex specifically recognizes 'Lys-63'-linked ubiquitinated histones H2A and H2AX at DNA lesion sites, leading to target the BRCA1-BARD1 heterodimer to sites of DNA damage at DSBs. This complex also possesses deubiquitinase activity that specifically removes 'Lys-63'-linked ubiquitin on histones H2A and H2AX. This is BRCA1-A complex subunit Abraxas 1 from Homo sapiens (Human).